The primary structure comprises 306 residues: MPEAGFQATNAFTECKFTCTSGKCLYLGSLVCNQQNDCGDNSDEENCLLVTEHPPPGIFNSELEFAQILIIVVVVTVMVVVVVCLLNHYKVSTRSFINRPNQSQRQEDGLQPEGSLWPSDSSVQRPGASEIMCAPRGRDRFTTPSFIQRDPFSRFQPTYPYVQHEIDLPPTISLSDGEEPPPYQGPCTLQLRDPEQQMELNRESVRAPPNRTVFDSDLIDISMYNGGPCPPSSHSGISAATCSSNGRMEGPPPTYSEVMGHYPGTSFFHHQHSNTHRGSRPQFQPNNSEGTIVPIKGKDRKPGDLV.

Residues 1 to 64 (MPEAGFQATN…PPGIFNSELE (64 aa)) are Lumenal-facing. The LDL-receptor class A domain occupies 11 to 48 (AFTECKFTCTSGKCLYLGSLVCNQQNDCGDNSDEENCL). 2 disulfides stabilise this stretch: cysteine 19/cysteine 38 and cysteine 32/cysteine 47. The helical transmembrane segment at 65 to 85 (FAQILIIVVVVTVMVVVVVCL) threads the bilayer. At 86-306 (LNHYKVSTRS…GKDRKPGDLV (221 aa)) the chain is on the cytoplasmic side. A disordered region spans residues 100–127 (PNQSQRQEDGLQPEGSLWPSDSSVQRPG). Residues 180–183 (PPPY) carry the PPxY motif 1 motif. The SMAD interaction motif (SIM) motif lies at 208 to 211 (PPNR). The short motif at 252 to 255 (PPTY) is the PPxY motif 2 element. Positions 268–306 (FHHQHSNTHRGSRPQFQPNNSEGTIVPIKGKDRKPGDLV) are disordered. Positions 269–279 (HHQHSNTHRGS) are enriched in basic residues. Polar residues predominate over residues 281-290 (PQFQPNNSEG). The segment covering 296–306 (KGKDRKPGDLV) has biased composition (basic and acidic residues).

The protein belongs to the PMEPA1 family. In terms of assembly, interacts with PMEPA1. Interacts (via the SMAD interaction motif) with SMAD2 and SMAD3. As to expression, detected in all tissues tested.

It is found in the early endosome membrane. Functions as a negative regulator of TGF-beta signaling and thereby probably plays a role in cell proliferation, differentiation, apoptosis, motility, extracellular matrix production and immunosuppression. In the canonical TGF-beta pathway, ZFYVE9/SARA recruits the intracellular signal transducer and transcriptional modulators SMAD2 and SMAD3 to the TGF-beta receptor. Phosphorylated by the receptor, SMAD2 and SMAD3 then form a heteromeric complex with SMAD4 that translocates to the nucleus to regulate transcription. Through interaction with SMAD2 and SMAD3, LDLRAD4 may compete with ZFYVE9 and SMAD4 and prevent propagation of the intracellular signal. This chain is Low-density lipoprotein receptor class A domain-containing protein 4 (Ldlrad4), found in Mus musculus (Mouse).